We begin with the raw amino-acid sequence, 540 residues long: MAAKIIKFKEDARQKILKGVRTLADAVKVTLGPKGRNVVIDKSYGTPHITKDGVTVAKEIELEDKFENMGAQMVKEVASKTADKAGDGTTTATVLAEAIYSEGLRNVAAGANPLDLKRGMEKAVKVIVQELKKRSKTVDDRNEIAQVATISANNDAEIGEMIAQAIEKVGRDGTITVEEGKGFETELDVVKGMKFDRGYLSAYFMTNSESQECILEDAYVLIYEKKISAIKEIIPLLQAVVETGRPLLIIAEDVEGEALATLVVNRLRAGLKVCAVKAPGFGDRRKAMLQDIAILTGGELISEEIGLKLETTTIEQLGRVKKAVLTKDETTLVEGAGTKAAILDRASQIKRQIEESTSDYDKEKLQERLAKLVGGVAVIHVGAATEIEMKEKKDRVDDAQRATAAAVEEGILPGGGTAFIRCIPAVNSLADSLEGDEKTGAKIMARSLSAPLRQIAENAGQEGAIILQAVEKMKEKEGYNALTGEYVDMITAGILDPTKVVRCALENAVSVAAMLLTTEAIVADIPEEKPAPAAPVGMDY.

Residues 30-33 (TLGP), lysine 51, 87-91 (DGTTT), glycine 415, 480-482 (NAL), and aspartate 496 contribute to the ATP site.

The protein belongs to the chaperonin (HSP60) family. In terms of assembly, forms a cylinder of 14 subunits composed of two heptameric rings stacked back-to-back. Interacts with the co-chaperonin GroES.

It localises to the cytoplasm. The catalysed reaction is ATP + H2O + a folded polypeptide = ADP + phosphate + an unfolded polypeptide.. Functionally, together with its co-chaperonin GroES, plays an essential role in assisting protein folding. The GroEL-GroES system forms a nano-cage that allows encapsulation of the non-native substrate proteins and provides a physical environment optimized to promote and accelerate protein folding. The polypeptide is Chaperonin GroEL 2 (Protochlamydia amoebophila (strain UWE25)).